Here is a 218-residue protein sequence, read N- to C-terminus: UPF0758 protein SAUSA300_1608 (218 aa).

The region spanning K92 to F214 is the MPN domain. Residues H163, H165, and D176 each contribute to the Zn(2+) site. The JAMM motif signature appears at H163–D176.

Belongs to the UPF0758 family.

The protein is UPF0758 protein SAUSA300_1608 of Staphylococcus aureus (strain USA300).